The chain runs to 273 residues: NH(3)-dependent NAD(+) synthetase (273 aa).

Gly-46–Ser-53 lines the ATP pocket. Residue Asp-52 participates in Mg(2+) binding. A deamido-NAD(+)-binding site is contributed by Arg-139. Thr-159 provides a ligand contact to ATP. A Mg(2+)-binding site is contributed by Glu-164. 2 residues coordinate deamido-NAD(+): Lys-172 and Asp-179. Residues Lys-188 and Thr-210 each contribute to the ATP site. A deamido-NAD(+)-binding site is contributed by His-259 to Lys-260.

The protein belongs to the NAD synthetase family. In terms of assembly, homodimer.

The enzyme catalyses deamido-NAD(+) + NH4(+) + ATP = AMP + diphosphate + NAD(+) + H(+). The protein operates within cofactor biosynthesis; NAD(+) biosynthesis; NAD(+) from deamido-NAD(+) (ammonia route): step 1/1. Catalyzes the ATP-dependent amidation of deamido-NAD to form NAD. Uses ammonia as a nitrogen source. This is NH(3)-dependent NAD(+) synthetase from Streptococcus thermophilus (strain ATCC BAA-250 / LMG 18311).